Consider the following 262-residue polypeptide: Sulfite reductase, dissimilatory-type subunit beta (262 aa).

7 residues coordinate [4Fe-4S] cluster: cysteine 151, cysteine 188, cysteine 189, cysteine 193, cysteine 231, cysteine 258, and cysteine 261. A siroheme-binding site is contributed by cysteine 193.

As to quaternary structure, heterohexamer of two alpha, two beta and two gamma subunits. The cofactor is [4Fe-4S] cluster. Siroheme is required as a cofactor.

It catalyses the reaction [DsrC protein]-trisulfide + NAD(+) + 3 H2O = [DsrC protein]-dithiol + sulfite + NADH + 3 H(+). Its function is as follows. Catalyzes the reduction of sulfite to sulfide. This is the terminal oxidation reaction in sulfate respiration, a process catalyzed by the sulfate-reducing bacteria. The sequence is that of Sulfite reductase, dissimilatory-type subunit beta (dsrB) from Megalodesulfovibrio gigas (strain ATCC 19364 / DSM 1382 / NCIMB 9332 / VKM B-1759) (Desulfovibrio gigas).